A 574-amino-acid polypeptide reads, in one-letter code: MSSGIILLIVAIVLLVIIAYLVGVIIRKRNDSLITSLEERKQALFALPVNDEIEEVKSLHLIGQSQTSFREWNQKWVDLTVNSFADIENHIFEAENLNDTFNFIRAKHEINSVESQLNLVEEDIASIREALNILKEQEEKNSARVTHALDLYEKLQASISENEDNFGSTMPEIDKQMKNIETEFSQFVALNSSGDPVEASEVLDRAEEHTIALGQITEQIPAIVAKLEDDFPDQLDDLETGYRRLLEENYHFPEKNIEARFQEIRESIRANSSELVTLDLDRAREENTHIQERIDSLYEVFEREIAAYKVAAKNSKMLPRYLAHVKRNNEQLKDEIARLSRKYILSETESLTVKAFEKDIKEIEDSTLAVAEQFGLQEKPFSELQVTFERSIKTLTNVESGQMDVFAAVKDIEKIESQARHNLDVYVTQLHMIKRYMEKRHLPGIPQDFLSAFFTTSSQLEALMDELSRGRINIEAVSRLSEVATVAIANLEDLTYQVVQNATLTEQLLQYSNRYRSFEAGVQSSFEHALRLFEVENDYQASFDEISYALETVEPGVTDRFVNSYEKTREHIRF.

The Extracellular portion of the chain corresponds to M1–L7. The chain crosses the membrane as a helical span at residues L8–I26. Residues R27 to F574 lie on the Cytoplasmic side of the membrane. 3 coiled-coil regions span residues N102–N141, E274–S350, and Q459–A520.

The protein belongs to the EzrA family.

It localises to the cell membrane. In terms of biological role, negative regulator of FtsZ ring formation; modulates the frequency and position of FtsZ ring formation. Inhibits FtsZ ring formation at polar sites. Interacts either with FtsZ or with one of its binding partners to promote depolymerization. The sequence is that of Septation ring formation regulator EzrA from Streptococcus pyogenes serotype M3 (strain SSI-1).